Reading from the N-terminus, the 284-residue chain is Polyamine aminopropyltransferase (284 aa).

A PABS domain is found at glutamate 2–lysine 237. Glutamine 31 is an S-methyl-5'-thioadenosine binding site. Residues histidine 62 and aspartate 86 each contribute to the spermidine site. S-methyl-5'-thioadenosine is bound by residues glutamate 106 and aspartate 137–glycine 138. The Proton acceptor role is filled by aspartate 155. Aspartate 155–aspartate 158 provides a ligand contact to spermidine. Position 162 (proline 162) interacts with S-methyl-5'-thioadenosine.

This sequence belongs to the spermidine/spermine synthase family. As to quaternary structure, homodimer or homotetramer.

The protein localises to the cytoplasm. The catalysed reaction is S-adenosyl 3-(methylsulfanyl)propylamine + putrescine = S-methyl-5'-thioadenosine + spermidine + H(+). It functions in the pathway amine and polyamine biosynthesis; spermidine biosynthesis; spermidine from putrescine: step 1/1. Catalyzes the irreversible transfer of a propylamine group from the amino donor S-adenosylmethioninamine (decarboxy-AdoMet) to putrescine (1,4-diaminobutane) to yield spermidine. In Clostridium botulinum (strain Alaska E43 / Type E3), this protein is Polyamine aminopropyltransferase.